We begin with the raw amino-acid sequence, 639 residues long: Extracellular metalloproteinase NpIII (639 aa).

Positions 1 to 16 are cleaved as a signal peptide; that stretch reads MHMLLFIGALALPVFV. A propeptide spanning residues 17–245 is cleaved from the precursor; that stretch reads CTQSCEPASL…IHGVVDYVSE (229 aa). 4 N-linked (GlcNAc...) asparagine glycosylation sites follow: Asn-287, Asn-320, Asn-336, and Asn-368. A Zn(2+)-binding site is contributed by His-429. Glu-430 is an active-site residue. His-433 is a Zn(2+) binding site. Asn-509 is a glycosylation site (N-linked (GlcNAc...) asparagine).

The protein belongs to the peptidase M36 family. The cofactor is Zn(2+).

The protein resides in the secreted. Functionally, secreted metalloproteinase that allows assimilation of proteinaceous substrates. The protein is Extracellular metalloproteinase NpIII (NpIII) of Aspergillus oryzae (strain ATCC 42149 / RIB 40) (Yellow koji mold).